We begin with the raw amino-acid sequence, 311 residues long: Nucleotide-binding protein Acel_1111 (311 aa).

An ATP-binding site is contributed by 30-37; sequence GLSGAGRS. 81 to 84 serves as a coordination point for GTP; the sequence is DVRS.

This sequence belongs to the RapZ-like family.

Displays ATPase and GTPase activities. This chain is Nucleotide-binding protein Acel_1111, found in Acidothermus cellulolyticus (strain ATCC 43068 / DSM 8971 / 11B).